An 891-amino-acid polypeptide reads, in one-letter code: Microtubule-associated protein 10 (891 aa).

Disordered stretches follow at residues 325–355 (AAVQ…PPQI), 401–457 (EDKG…VTKG), 504–679 (SWKG…KSSC), and 702–844 (TTEN…SNLS). Low complexity predominate over residues 407–417 (PSTKSTSPSES). Polar residues-rich tracts occupy residues 509–520 (VSSSAAESQMSP) and 527–544 (PTDS…SQLP). Composition is skewed to basic and acidic residues over residues 577-592 (STTK…KQEM) and 645-658 (TVDK…DGRQ). Composition is skewed to polar residues over residues 665 to 679 (ADTS…KSSC), 702 to 718 (TTEN…SSTG), 726 to 749 (SRAS…SSVL), 776 to 790 (EASS…SQWT), and 826 to 844 (KSQS…SNLS).

As to quaternary structure, interacts (via middle region) with microtubules.

The protein resides in the cytoplasm. Its subcellular location is the cytoskeleton. It is found in the spindle pole. The protein localises to the microtubule organizing center. It localises to the centrosome. The protein resides in the midbody. In terms of biological role, microtubule-associated protein (MAP) that plays a role in the regulation of cell division; promotes microtubule stability and participates in the organization of the spindle midzone and normal progress of cytokinesis. The chain is Microtubule-associated protein 10 (Map10) from Mus musculus (Mouse).